Consider the following 82-residue polypeptide: uncharacterized protein (82 aa).

A run of 3 helical transmembrane segments spans residues 4–26, 31–50, and 55–77; these read IAVL…AGHF, FWVA…VTLA, and SFIF…TLFL.

The protein localises to the cell membrane. This is an uncharacterized protein from Bacillus subtilis (strain 168).